The primary structure comprises 141 residues: Hemoglobin subunit alpha-2 (141 aa).

The Globin domain occupies 1–141; it reads VLSPADKNNV…VSTVLTSKYR (141 aa). Residue His58 coordinates O2. Heme b is bound at residue His87.

This sequence belongs to the globin family. In terms of assembly, heterotetramer of two alpha chains and two beta chains. As to expression, red blood cells.

In terms of biological role, involved in oxygen transport from the lung to the various peripheral tissues. The polypeptide is Hemoglobin subunit alpha-2 (Varecia variegata (Black-and-white ruffed lemur)).